Reading from the N-terminus, the 520-residue chain is Bifunctional dihydrofolate reductase-thymidylate synthase (520 aa).

The 204-residue stretch at 26 to 229 folds into the DHFR domain; that stretch reads AFSIVVALDM…LEFEICKYVP (204 aa). Residue Val-30 participates in substrate binding. Residues Ala-32 and 38-44 each bind NADP(+); that span reads GIGDGES. Asp-52 lines the substrate pocket. NADP(+)-binding positions include 81 to 83, 102 to 105, and 157 to 164; these read RKT, LSSK, and GGAQVYAD. Residues Tyr-162 and Thr-180 each coordinate substrate. The thymidylate synthase stretch occupies residues 234 to 520; sequence ERQYLELIDR…HPAIKMEMAV (287 aa). Arg-254 is a binding site for dUMP. Residue Cys-400 is part of the active site. DUMP contacts are provided by residues His-401, 421–425, Asn-433, and 463–465; these read QRSCD and HVY.

In the N-terminal section; belongs to the dihydrofolate reductase family. It in the C-terminal section; belongs to the thymidylate synthase family.

It carries out the reaction (6S)-5,6,7,8-tetrahydrofolate + NADP(+) = 7,8-dihydrofolate + NADPH + H(+). The catalysed reaction is dUMP + (6R)-5,10-methylene-5,6,7,8-tetrahydrofolate = 7,8-dihydrofolate + dTMP. The protein operates within cofactor biosynthesis; tetrahydrofolate biosynthesis; 5,6,7,8-tetrahydrofolate from 7,8-dihydrofolate: step 1/1. Bifunctional enzyme. Involved in de novo dTMP biosynthesis. Key enzyme in folate metabolism. Catalyzes an essential reaction for de novo glycine and purine synthesis, DNA precursor synthesis, and for the conversion of dUMP to dTMP. This chain is Bifunctional dihydrofolate reductase-thymidylate synthase, found in Leishmania major.